Reading from the N-terminus, the 223-residue chain is MSNMNQTIMDAFHFRHATKQFDPQKKVSKEDFETILESGRLSPSSLGLEPWKFVVIQDQALRDELKAHSWGAAKQLDTASHFVLIFARKNVTSRSPYVQHMLRDIKKYEAQTIPAVEQKFDAFQADFHISDNDQALYDWSSKQTYIALGNMMTTAALLGIDSCPMEGFSLDTVTDILANKGILDTEQFGLSVMVAFGYRQQEPPKNKTRQAYEDVIEWVGPKE.

It belongs to the nitroreductase family. FMN serves as cofactor.

This Staphylococcus aureus (strain USA300) protein is Putative NAD(P)H nitroreductase SAUSA300_2462.